The chain runs to 225 residues: Phosphoglycolate phosphatase (225 aa).

D11 serves as the catalytic Nucleophile. Residues D11 and D13 each coordinate Mg(2+). A substrate-binding site is contributed by K153. D176 and D180 together coordinate Mg(2+).

Belongs to the archaeal SPP-like hydrolase family. The cofactor is Mg(2+).

The catalysed reaction is 2-phosphoglycolate + H2O = glycolate + phosphate. Its function is as follows. Catalyzes the dephosphorylation of 2-phosphoglycolate. The chain is Phosphoglycolate phosphatase from Halobacterium salinarum (strain ATCC 29341 / DSM 671 / R1).